Reading from the N-terminus, the 90-residue chain is Acylphosphatase (90 aa).

One can recognise an Acylphosphatase-like domain in the interval 3–89 (ALKIRVEGIV…EGYEDFTIKY (87 aa)). Active-site residues include arginine 18 and asparagine 36.

It belongs to the acylphosphatase family.

The catalysed reaction is an acyl phosphate + H2O = a carboxylate + phosphate + H(+). This is Acylphosphatase (acyP) from Thermotoga maritima (strain ATCC 43589 / DSM 3109 / JCM 10099 / NBRC 100826 / MSB8).